The following is a 365-amino-acid chain: Neuronal migration protein doublecortin (365 aa).

Ser-28 bears the Phosphoserine; by CDK5 mark. Ser-47 carries the post-translational modification Phosphoserine; by MARK1 and PKA. Doublecortin domains lie at 53–139 (KKVR…VEYT) and 180–263 (KLVT…AQDD). The residue at position 70 (Tyr-70) is a Phosphotyrosine; by ABL. Position 74 is a phosphoserine; by PKC (Ser-74). Position 90 is a phosphoserine; by CK2 (Ser-90). A Phosphoserine; by PKC modification is found at Ser-110. The residue at position 115 (Ser-115) is a Phosphoserine; by CK2, MARK1 and PKA. A Phosphoserine; by CK2 modification is found at Ser-265. Residues 275-365 (KGNPSATAGP…DDSDSLGDSM (91 aa)) form a disordered region. Phosphoserine; by CDK5 is present on Ser-287. Residue Thr-289 is modified to Phosphothreonine; by CDK5. Ser-294 carries the phosphoserine; by PKC modification. Ser-297 is modified (phosphoserine; by CDK5). Ser-306 bears the Phosphoserine; by CK2 mark. Ser-306 carries the phosphoserine; by DYRK2 modification. Over residues 307-341 (PADSGNDQDANGTSSSQLSTPKSKQSPISTPTSPG) the composition is skewed to polar residues. Thr-326 is subject to Phosphothreonine; by CDK5. Thr-326 bears the Phosphothreonine; by PKC and MAPK mark. Ser-332 is modified (phosphoserine; by CDK5). The residue at position 332 (Ser-332) is a Phosphoserine; by MAPK. Thr-336 is modified (phosphothreonine; by MAPK). A Phosphoserine; by CDK5 modification is found at Ser-339. A Phosphoserine; by MAPK modification is found at Ser-339. Phosphoserine; by PKC is present on Ser-342. A phosphoserine; by CK2 mark is found at Ser-354 and Ser-360. A compositionally biased stretch (acidic residues) spans 356–365 (DDSDSLGDSM).

Interacts with tubulin. Interacts with USP9X. Phosphorylation by MARK1, MARK2 and PKA regulates its ability to bind microtubules. Phosphorylation at Ser-265 and Ser-297 seems to occur only in neonatal brain, the levels falling precipitously by postnatal day 21. In terms of processing, ubiquitinated by MDM2, leading to its degradation by the proteasome. Ubiquitinated by MDM2 and subsequent degradation leads to reduce the dendritic spine density of olfactory bulb granule cells.

Its subcellular location is the cytoplasm. The protein resides in the cell projection. It is found in the neuron projection. In terms of biological role, microtubule-associated protein required for initial steps of neuronal dispersion and cortex lamination during cerebral cortex development. May act by competing with the putative neuronal protein kinase DCLK1 in binding to a target protein. May in that way participate in a signaling pathway that is crucial for neuronal interaction before and during migration, possibly as part of a calcium ion-dependent signal transduction pathway. May participate along with PAFAH1B1/LIS-1 in a distinct overlapping signaling pathway that promotes neuronal migration. The chain is Neuronal migration protein doublecortin (Dcx) from Rattus norvegicus (Rat).